We begin with the raw amino-acid sequence, 539 residues long: Chaperone Ric-8A (539 aa).

A disordered region spans residues 507–539 (MGITPSGNLAPMENAIRDMADERSSSDSDLGLD). Positions 521-532 (AIRDMADERSSS) are enriched in basic and acidic residues.

It belongs to the synembryn family.

It localises to the cytoplasm. Its subcellular location is the cell cortex. In terms of biological role, chaperone that specifically binds and folds nascent G alpha proteins prior to G protein heterotrimer formation, promoting their stability and activity: folds GNAI1, GNAO1, GNA13 and GNAQ. Does not fold G(s) G-alpha proteins GNAS nor GNAL. Also acts as a guanine nucleotide exchange factor (GEF) for G alpha proteins by stimulating exchange of bound GDP for free GTP. The chain is Chaperone Ric-8A (RIC8A) from Gallus gallus (Chicken).